Here is a 30-residue protein sequence, read N- to C-terminus: Cycloviolacin-O10 (30 aa).

The cyclopeptide (Gly-Asn) cross-link spans 1–30; sequence GIPCGESCVYIPCLTSAVGCSCKSKVCYRN. 3 disulfide bridges follow: Cys4-Cys20, Cys8-Cys22, and Cys13-Cys27.

Post-translationally, this is a cyclic peptide. In terms of tissue distribution, expressed in petals and roots but not in leaves, petioles and runners (at protein level).

Its function is as follows. Probably participates in a plant defense mechanism. The protein is Cycloviolacin-O10 of Viola odorata (Sweet violet).